The primary structure comprises 289 residues: ATP synthase gamma chain (289 aa).

The protein belongs to the ATPase gamma chain family. In terms of assembly, F-type ATPases have 2 components, CF(1) - the catalytic core - and CF(0) - the membrane proton channel. CF(1) has five subunits: alpha(3), beta(3), gamma(1), delta(1), epsilon(1). CF(0) has three main subunits: a, b and c.

The protein localises to the cell inner membrane. In terms of biological role, produces ATP from ADP in the presence of a proton gradient across the membrane. The gamma chain is believed to be important in regulating ATPase activity and the flow of protons through the CF(0) complex. This is ATP synthase gamma chain from Polynucleobacter necessarius subsp. necessarius (strain STIR1).